The chain runs to 458 residues: Transcription factor bHLH10 (458 aa).

A disordered region spans residues 1-49; that stretch reads MEEERESLYEEMGCFDPNTPAEVTVESSFSQAEPPPPPPQVLVAGSTSN. Residues 243 to 292 enclose the bHLH domain; that stretch reads SRKSRTSPTERERRVHFNDRFFDLKNLIPNPTKIDRASIVGEAIDYIKEL. The segment at 315–338 is disordered; the sequence is KRARVGEGGGGEDQEEEEDTVNYK. Over residues 324–334 the composition is skewed to acidic residues; the sequence is GGEDQEEEEDT.

In terms of assembly, homodimer.

Its subcellular location is the nucleus. This chain is Transcription factor bHLH10 (BHLH10), found in Arabidopsis thaliana (Mouse-ear cress).